A 495-amino-acid chain; its full sequence is Glucose-6-phosphate 1-dehydrogenase (495 aa).

Residues G11–K18, R45, D84–V85, and K147 each bind NADP(+). The substrate site is built by H177, K181, E215, and D234. The Proton acceptor role is filled by H239. Substrate contacts are provided by K339 and K344.

Belongs to the glucose-6-phosphate dehydrogenase family.

It carries out the reaction D-glucose 6-phosphate + NADP(+) = 6-phospho-D-glucono-1,5-lactone + NADPH + H(+). It participates in carbohydrate degradation; pentose phosphate pathway; D-ribulose 5-phosphate from D-glucose 6-phosphate (oxidative stage): step 1/3. In terms of biological role, catalyzes the oxidation of glucose 6-phosphate to 6-phosphogluconolactone. This chain is Glucose-6-phosphate 1-dehydrogenase, found in Streptococcus pneumoniae serotype 4 (strain ATCC BAA-334 / TIGR4).